Reading from the N-terminus, the 60-residue chain is Large ribosomal subunit protein eL37 (60 aa).

Zn(2+)-binding residues include C19, C22, C34, and C37. Residues 19-37 (CRRCGRISFHAQKKVCSSC) form a C4-type zinc finger.

This sequence belongs to the eukaryotic ribosomal protein eL37 family. Requires Zn(2+) as cofactor.

Its function is as follows. Binds to the 23S rRNA. This is Large ribosomal subunit protein eL37 from Methanoregula boonei (strain DSM 21154 / JCM 14090 / 6A8).